Reading from the N-terminus, the 244-residue chain is Geranylgeranylglyceryl phosphate synthase (244 aa).

Mg(2+) is bound by residues aspartate 21 and threonine 50. Residues 168–174, 200–201, and 222–223 each bind sn-glycerol 1-phosphate; these read YLEAGSG, GG, and GN.

Belongs to the GGGP/HepGP synthase family. Group II subfamily. Mg(2+) serves as cofactor.

It localises to the cytoplasm. It carries out the reaction sn-glycerol 1-phosphate + (2E,6E,10E)-geranylgeranyl diphosphate = sn-3-O-(geranylgeranyl)glycerol 1-phosphate + diphosphate. Its pathway is membrane lipid metabolism; glycerophospholipid metabolism. Prenyltransferase that catalyzes the transfer of the geranylgeranyl moiety of geranylgeranyl diphosphate (GGPP) to the C3 hydroxyl of sn-glycerol-1-phosphate (G1P). This reaction is the first ether-bond-formation step in the biosynthesis of archaeal membrane lipids. This Sulfurisphaera tokodaii (strain DSM 16993 / JCM 10545 / NBRC 100140 / 7) (Sulfolobus tokodaii) protein is Geranylgeranylglyceryl phosphate synthase.